A 327-amino-acid polypeptide reads, in one-letter code: MPALLERPKLSNAMARALHRHIMMERERKRQEEEEVDKMMEQKMKEEQERRKKKEMEERMSLEETKEQILKLQEKLSALQEEKHQLFLQLKKVLHEEEKRRRKEQSDLTTLTSAAYQQSLTVHTGTHLLSMQGSPGGHNRPGTLMAADRAKQMFGPQVLTTRHYVGSAAAFAGTPEHGQFQGSPGGAYGTAQPPPHYGPTQPAYSPSQQLRAPSAFPAVQYLSQPQPQPYAVHGHFQPTQTGFLQPGSTLSLQKQMEHANQQTSFSDSSSLRPMHPQALHPAPGLLASPQLPVQIQAAGKSGFATTSQPGPRLPFIQHSQNPRFYHK.

A coiled-coil region spans residues 14 to 109 (MARALHRHIM…RRRKEQSDLT (96 aa)). Positions 26–65 (RERKRQEEEEVDKMMEQKMKEEQERRKKKEMEERMSLEET) are disordered. Glycyl lysine isopeptide (Lys-Gly) (interchain with G-Cter in SUMO1) cross-links involve residues Lys-45 and Lys-71. Positions 61 to 94 (SLEETKEQILKLQEKLSALQEEKHQLFLQLKKVL) are interaction with SUMO. 3 disordered regions span residues 178–208 (GQFQ…SPSQ), 253–285 (QKQM…APGL), and 300–327 (KSGF…FYHK). Residues 253 to 271 (QKQMEHANQQTSFSDSSSL) are compositionally biased toward polar residues. Arg-312 bears the Asymmetric dimethylarginine mark. Over residues 317 to 327 (QHSQNPRFYHK) the composition is skewed to polar residues. Asymmetric dimethylarginine; alternate is present on Arg-323. Omega-N-methylarginine; alternate is present on Arg-323.

Component of the N-Cor repressor complex, at least composed of NCOR1, NCOR2, HDAC3, TBL1X, TBL1R, CORO2A and GPS2. Interacts (when sumoylated at Lys-71) with TBL1X; leading to protect GPS2 from degradation by the proteasome. Interacts with UBE2N; leading to inhibit UBE2N/Ubc13 activity. Interacts with TRAF1. Interacts with TRAF2. Interacts with TRAF6. Interacts with PPARG (when in the liganded conformation). Interacts with (sumoylated) NR1H2; interaction with sumoylated NR1H2 and NR5A2 onto hepatic acute phase protein promoters prevents N-Cor corepressor complex dissociation. Interacts with (sumoylated) NR5A2; interaction with sumoylated NR1H2 and NR5A2 onto hepatic acute phase protein promoters prevents N-Cor corepressor complex dissociation. Interacts with NR1H3. Interacts with RFX4. Interacts with ANKRD26. Sumoylation regulates its subcellular location. Sumoylation at Lys-45 and Lys-71 regulates the shuttling between the cytoplasm and the nucleus. Sumoylation at Lys-71 is required for interaction with TBL1X. Sumoylated at Lys-45 and Lys-71 in mitochondrion. Desumoylation by SENP1 leads to relocation from the mitochondria to the nucleus. In terms of processing, ubiquitinated at the C-terminus by SIAH2; leading to its degradation by the proteasome. Interaction with TBL1X and methylation at Arg-323 protect GPS2 against ubiquitination and degradation. Post-translationally, methylated at Arg-312 and Arg-323 by PRMT6. Methylation at Arg-323 protects from degradation by the proteasome.

The protein localises to the nucleus. Its subcellular location is the mitochondrion. It is found in the cytoplasm. The protein resides in the cytosol. Its function is as follows. Key regulator of inflammation, lipid metabolism and mitochondrion homeostasis that acts by inhibiting the activity of the ubiquitin-conjugating enzyme UBE2N/Ubc13, thereby inhibiting 'Lys-63'-linked ubiquitination. In the nucleus, can both acts as a corepressor and coactivator of transcription, depending on the context. Acts as a transcription coactivator in adipocytes by promoting the recruitment of PPARG to promoters: acts by inhibiting the activity of the ubiquitin-conjugating enzyme UBE2N/Ubc13, leading to stabilization of KDM4A and subsequent histone H3 'Lys-9' (H3K9) demethylation. Promotes cholesterol efflux by acting as a transcription coactivator. Acts as a regulator of B-cell development by inhibiting UBE2N/Ubc13, thereby restricting the activation of Toll-like receptors (TLRs) and B-cell antigen receptors (BCRs) signaling pathways. Acts as a key mediator of mitochondrial stress response: in response to mitochondrial depolarization, relocates from the mitochondria to the nucleus following desumoylation and specifically promotes expression of nuclear-encoded mitochondrial genes. Promotes transcription of nuclear-encoded mitochondrial genes by inhibiting UBE2N/Ubc13. Can also act as a corepressor as part of the N-Cor repressor complex by repressing active PPARG. Plays an anti-inflammatory role in macrophages and is required for insulin sensitivity by acting as a corepressor. Plays an anti-inflammatory role during the hepatic acute phase response by interacting with sumoylated NR1H2 and NR5A2 proteins, thereby preventing N-Cor corepressor complex dissociation. In the cytosol, also plays a non-transcriptional role by regulating insulin signaling and pro-inflammatory pathways. In the cytoplasm, acts as a negative regulator of inflammation by inhibiting the pro-inflammatory TNF-alpha pathway; acts by repressing UBE2N/Ubc13 activity. In the cytoplasm of adipocytes, restricts the activation of insulin signaling via inhibition of UBE2N/Ubc13-mediated ubiquitination of AKT. Able to suppress G-protein- and mitogen-activated protein kinase-mediated signal transduction. The chain is G protein pathway suppressor 2 from Mus musculus (Mouse).